Consider the following 194-residue polypeptide: Ras-like protein RAS1 (194 aa).

Position 16-23 (16-23 (GAGGVGKS)) interacts with GTP. The Effector region signature appears at 38–46 (YDPTIEDSY). GTP is bound by residues 63 to 67 (DTAGQ) and 122 to 125 (NKVD). Position 191 is a cysteine methyl ester (Cys191). A lipid anchor (S-geranylgeranyl cysteine) is attached at Cys191. Positions 192–194 (TLL) are cleaved as a propeptide — removed in mature form.

The protein belongs to the small GTPase superfamily. Ras family.

The protein resides in the cell membrane. It catalyses the reaction GTP + H2O = GDP + phosphate + H(+). With respect to regulation, alternates between an inactive form bound to GDP and an active form bound to GTP. Activated by a guanine nucleotide-exchange factor (GEF) and inactivated by a GTPase-activating protein (GAP). Functionally, ras proteins bind GDP/GTP and possess intrinsic GTPase activity. In Hydra vulgaris (Hydra), this protein is Ras-like protein RAS1 (RAS1).